A 503-amino-acid chain; its full sequence is Probable cytosol aminopeptidase (503 aa).

Residues lysine 270 and aspartate 275 each contribute to the Mn(2+) site. The active site involves lysine 282. Mn(2+) is bound by residues aspartate 293, aspartate 352, and glutamate 354. The active site involves arginine 356.

The protein belongs to the peptidase M17 family. Requires Mn(2+) as cofactor.

It is found in the cytoplasm. It catalyses the reaction Release of an N-terminal amino acid, Xaa-|-Yaa-, in which Xaa is preferably Leu, but may be other amino acids including Pro although not Arg or Lys, and Yaa may be Pro. Amino acid amides and methyl esters are also readily hydrolyzed, but rates on arylamides are exceedingly low.. The catalysed reaction is Release of an N-terminal amino acid, preferentially leucine, but not glutamic or aspartic acids.. Its function is as follows. Presumably involved in the processing and regular turnover of intracellular proteins. Catalyzes the removal of unsubstituted N-terminal amino acids from various peptides. The polypeptide is Probable cytosol aminopeptidase (Citrobacter koseri (strain ATCC BAA-895 / CDC 4225-83 / SGSC4696)).